A 403-amino-acid chain; its full sequence is Protein-glutamate methylesterase/protein-glutamine glutaminase (403 aa).

The Response regulatory domain occupies 8–126 (AVLIVDDSAL…SAHLRTVSRK (119 aa)). Position 59 is a 4-aspartylphosphate (Asp59). The region spanning 204 to 393 (PLRESGALQI…VSLDDMAATI (190 aa)) is the CheB-type methylesterase domain. Residues Ser219, His246, and Asp342 contribute to the active site.

Belongs to the CheB family. In terms of processing, phosphorylated by CheA. Phosphorylation of the N-terminal regulatory domain activates the methylesterase activity.

It localises to the cytoplasm. The catalysed reaction is [protein]-L-glutamate 5-O-methyl ester + H2O = L-glutamyl-[protein] + methanol + H(+). It catalyses the reaction L-glutaminyl-[protein] + H2O = L-glutamyl-[protein] + NH4(+). Functionally, involved in chemotaxis. Part of a chemotaxis signal transduction system that modulates chemotaxis in response to various stimuli. Catalyzes the demethylation of specific methylglutamate residues introduced into the chemoreceptors (methyl-accepting chemotaxis proteins or MCP) by CheR. Also mediates the irreversible deamidation of specific glutamine residues to glutamic acid. This Treponema pallidum (strain Nichols) protein is Protein-glutamate methylesterase/protein-glutamine glutaminase.